We begin with the raw amino-acid sequence, 54 residues long: Large ribosomal subunit protein bL33B (54 aa).

It belongs to the bacterial ribosomal protein bL33 family.

In Mycobacterium sp. (strain KMS), this protein is Large ribosomal subunit protein bL33B.